We begin with the raw amino-acid sequence, 214 residues long: Cytochrome c biogenesis ATP-binding export protein CcmA (214 aa).

The region spanning 12–214 (LAAHDLAFSR…TRMLTLEVAA (203 aa)) is the ABC transporter domain. 44–51 (GDNGAGKT) contributes to the ATP binding site.

Belongs to the ABC transporter superfamily. CcmA exporter (TC 3.A.1.107) family. The complex is composed of two ATP-binding proteins (CcmA) and two transmembrane proteins (CcmB).

Its subcellular location is the cell inner membrane. It carries out the reaction heme b(in) + ATP + H2O = heme b(out) + ADP + phosphate + H(+). Its function is as follows. Part of the ABC transporter complex CcmAB involved in the biogenesis of c-type cytochromes; once thought to export heme, this seems not to be the case, but its exact role is uncertain. Responsible for energy coupling to the transport system. This Xanthomonas axonopodis pv. citri (strain 306) protein is Cytochrome c biogenesis ATP-binding export protein CcmA.